The following is a 393-amino-acid chain: Tryptophan 2,3-dioxygenase (393 aa).

Substrate-binding positions include 56–60 (FIVTH) and R127. H312 contributes to the heme binding site. T327 serves as a coordination point for substrate.

It belongs to the tryptophan 2,3-dioxygenase family. Homotetramer. Dimer of dimers. Heme is required as a cofactor.

The enzyme catalyses L-tryptophan + O2 = N-formyl-L-kynurenine. It participates in amino-acid degradation; L-tryptophan degradation via kynurenine pathway; L-kynurenine from L-tryptophan: step 1/2. The protein operates within pigment biosynthesis; ommochrome biosynthesis. With respect to regulation, stimulated by low concentrations of hydrogen peroxide (5 uM), ascorbate (0.1-0.3 mM), and sodium hydrosulfite (0.1 mM). Inhibited by high concentrations of hydrogen peroxide (0.1 mM), ascorbate (10 mM), and sodium hydrosulfite (1 mM). Functionally, heme-dependent dioxygenase that catalyzes the oxidative cleavage of the L-tryptophan (L-Trp) pyrrole ring and converts L-tryptophan to N-formyl-L-kynurenine. Catalyzes the oxidative cleavage of the indole moiety. The chain is Tryptophan 2,3-dioxygenase from Aedes aegypti (Yellowfever mosquito).